The sequence spans 205 residues: Small ribosomal subunit protein uS4B (205 aa).

In terms of domain architecture, S4 RNA-binding spans 94 to 157 (RRLDNVVFRA…LNLPIVLGTL (64 aa)).

The protein belongs to the universal ribosomal protein uS4 family. As to quaternary structure, part of the 30S ribosomal subunit. Contacts protein S5. The interaction surface between S4 and S5 is involved in control of translational fidelity.

Its function is as follows. One of the primary rRNA binding proteins, it binds directly to 16S rRNA where it nucleates assembly of the body of the 30S subunit. In terms of biological role, with S5 and S12 plays an important role in translational accuracy. The chain is Small ribosomal subunit protein uS4B from Nitrosomonas europaea (strain ATCC 19718 / CIP 103999 / KCTC 2705 / NBRC 14298).